Consider the following 593-residue polypeptide: NADH-quinone oxidoreductase subunit C/D (593 aa).

The tract at residues 1 to 184 (MTADNAIFIP…DPYSLTLAKQ (184 aa)) is NADH dehydrogenase I subunit C. Residues 208-593 (DYMFLNLGPN…IDFVMADVDR (386 aa)) are NADH dehydrogenase I subunit D.

This sequence in the N-terminal section; belongs to the complex I 30 kDa subunit family. The protein in the C-terminal section; belongs to the complex I 49 kDa subunit family. In terms of assembly, NDH-1 is composed of 13 different subunits. Subunits NuoB, CD, E, F, and G constitute the peripheral sector of the complex.

It localises to the cell inner membrane. The catalysed reaction is a quinone + NADH + 5 H(+)(in) = a quinol + NAD(+) + 4 H(+)(out). Its function is as follows. NDH-1 shuttles electrons from NADH, via FMN and iron-sulfur (Fe-S) centers, to quinones in the respiratory chain. The immediate electron acceptor for the enzyme in this species is believed to be ubiquinone. Couples the redox reaction to proton translocation (for every two electrons transferred, four hydrogen ions are translocated across the cytoplasmic membrane), and thus conserves the redox energy in a proton gradient. This is NADH-quinone oxidoreductase subunit C/D from Pseudomonas putida (strain GB-1).